The primary structure comprises 170 residues: UPF0201 protein MJ1564 (170 aa).

Residues 133–148 are compositionally biased toward acidic residues; sequence NEDELEEEEEKEDSEE. The tract at residues 133–170 is disordered; the sequence is NEDELEEEEEKEDSEEIKEGHKEENNLKIKVIDNSSGD. Residues 149-163 show a composition bias toward basic and acidic residues; the sequence is IKEGHKEENNLKIKV.

This sequence belongs to the UPF0201 family.

This Methanocaldococcus jannaschii (strain ATCC 43067 / DSM 2661 / JAL-1 / JCM 10045 / NBRC 100440) (Methanococcus jannaschii) protein is UPF0201 protein MJ1564.